Consider the following 51-residue polypeptide: Zinc metalloproteinase-disintegrin-like crovidisin (51 aa).

One can recognise a Peptidase M12B domain in the interval 1–12 (AMVTKNNGDLDK). Residues 13 to 18 (SGTECR) enclose the Disintegrin domain. An N-linked (GlcNAc...) asparagine glycan is attached at Asn29.

This sequence belongs to the venom metalloproteinase (M12B) family. P-III subfamily. P-IIIa sub-subfamily. Monomer. It depends on Zn(2+) as a cofactor. Expressed by the venom gland.

The protein localises to the secreted. Snake venom zinc metalloproteinase-disintegrin-like that blocks the interaction between platelets and collagen fibers through its binding to collagen fibers, resulting in the blockade of collagen-mediated platelet functions such as adhesion, release reaction, thromboxane formation, and aggregation. Binds selectively to collagen type I with high affinity. Also exerts proteolytic activity to matrix. The chain is Zinc metalloproteinase-disintegrin-like crovidisin from Crotalus viridis viridis (Prairie rattlesnake).